A 414-amino-acid chain; its full sequence is Enolase (414 aa).

Gln-156 serves as a coordination point for (2R)-2-phosphoglycerate. Glu-200 serves as the catalytic Proton donor. Residues Asp-236, Glu-281, and Asp-308 each contribute to the Mg(2+) site. Lys-333, Arg-362, Ser-363, and Lys-384 together coordinate (2R)-2-phosphoglycerate. The active-site Proton acceptor is Lys-333.

The protein belongs to the enolase family. Mg(2+) is required as a cofactor.

It is found in the cytoplasm. The protein resides in the secreted. It localises to the cell surface. The catalysed reaction is (2R)-2-phosphoglycerate = phosphoenolpyruvate + H2O. The protein operates within carbohydrate degradation; glycolysis; pyruvate from D-glyceraldehyde 3-phosphate: step 4/5. Catalyzes the reversible conversion of 2-phosphoglycerate (2-PG) into phosphoenolpyruvate (PEP). It is essential for the degradation of carbohydrates via glycolysis. The sequence is that of Enolase from Methanosphaera stadtmanae (strain ATCC 43021 / DSM 3091 / JCM 11832 / MCB-3).